We begin with the raw amino-acid sequence, 572 residues long: Sulfate adenylyltransferase (572 aa).

The segment at 1-169 (MANAPHGGVL…IEAVNKLNHY (169 aa)) is N-terminal. The interval 170–393 (DYVALRYTPA…LRESNPPRAT (224 aa)) is catalytic. Residue glutamine 197 coordinates sulfate. Residues 197 to 200 (QTRN) and 291 to 294 (GRDH) contribute to the ATP site. Catalysis depends on residues threonine 198, arginine 199, and asparagine 200. Arginine 199 lines the sulfate pocket. Alanine 295 contacts sulfate. Valine 333 contributes to the ATP binding site. The tract at residues 394 to 572 (QGFTIFLTGY…LESQGFLERQ (179 aa)) is allosteric regulation domain; adenylyl-sulfate kinase-like. Residues 433–436 (DTVR), arginine 450, 476–477 (IA), and arginine 514 contribute to the 3'-phosphoadenylyl sulfate site.

The protein in the N-terminal section; belongs to the sulfate adenylyltransferase family. In the C-terminal section; belongs to the APS kinase family. As to quaternary structure, homohexamer. Dimer of trimers.

It is found in the cytoplasm. The enzyme catalyses sulfate + ATP + H(+) = adenosine 5'-phosphosulfate + diphosphate. It functions in the pathway sulfur metabolism; hydrogen sulfide biosynthesis; sulfite from sulfate: step 1/3. Allosterically inhibited by 3'-phosphoadenosine 5'-phosphosulfate (PAPS). Catalyzes the first intracellular reaction of sulfate assimilation, forming adenosine-5'-phosphosulfate (APS) from inorganic sulfate and ATP. Plays an important role in sulfate activation as a component of the biosynthesis pathway of sulfur-containing amino acids. The sequence is that of Sulfate adenylyltransferase from Penicillium chrysogenum (Penicillium notatum).